The sequence spans 799 residues: Elongation factor G, mitochondrial (799 aa).

A mitochondrion-targeting transit peptide spans 1 to 34; sequence MRCPSLTRLPYRAVSGLPRSVVRLQSQNFLTRRC. The 288-residue stretch at 97–384 folds into the tr-type G domain; the sequence is SRVRNIGIAA…GVVDYLPNPA (288 aa). GTP is bound by residues 106–113, 182–186, and 236–239; these read AHIDSGKT, DTPGH, and NKMD.

Belongs to the TRAFAC class translation factor GTPase superfamily. Classic translation factor GTPase family. EF-G/EF-2 subfamily.

Its subcellular location is the mitochondrion. The protein operates within protein biosynthesis; polypeptide chain elongation. Functionally, mitochondrial GTPase that catalyzes the GTP-dependent ribosomal translocation step during translation elongation. During this step, the ribosome changes from the pre-translocational (PRE) to the post-translocational (POST) state as the newly formed A-site-bound peptidyl-tRNA and P-site-bound deacylated tRNA move to the P and E sites, respectively. Catalyzes the coordinated movement of the two tRNA molecules, the mRNA and conformational changes in the ribosome. In Aspergillus flavus (strain ATCC 200026 / FGSC A1120 / IAM 13836 / NRRL 3357 / JCM 12722 / SRRC 167), this protein is Elongation factor G, mitochondrial (mef1).